Here is a 206-residue protein sequence, read N- to C-terminus: Thymidylate kinase (206 aa).

Residue 10 to 17 (GIDGAGKS) participates in ATP binding.

Belongs to the thymidylate kinase family.

The enzyme catalyses dTMP + ATP = dTDP + ADP. Its function is as follows. Phosphorylation of dTMP to form dTDP in both de novo and salvage pathways of dTTP synthesis. This chain is Thymidylate kinase, found in Neisseria gonorrhoeae (strain ATCC 700825 / FA 1090).